The sequence spans 2294 residues: Reducing polyketide synthase BOA9 (2294 aa).

Residues 4–409 (PEPVAIIGMG…GANATAIVEA (406 aa)) enclose the Ketosynthase family 3 (KS3) domain. The segment at 537–853 (IFTGQGAQNA…DYAATLVRGQ (317 aa)) is malonyl-CoA:ACP transacylase (MAT) domain. The active-site For malonyltransferase activity is the Ser-630. An N-terminal hotdog fold region spans residues 930–1067 (HDLLGAILPG…GTVTKKKAVT (138 aa)). Residues 930–1104 (HDLLGAILPG…LNYGPAFNGL (175 aa)) form a dehydratase (DH) domain region. The region spanning 930 to 1236 (HDLLGAILPG…CTQYSEALDD (307 aa)) is the PKS/mFAS DH domain. Catalysis depends on His-962, which acts as the Proton acceptor; for dehydratase activity. The interval 1078–1236 (QEPKAARTWY…CTQYSEALDD (159 aa)) is C-terminal hotdog fold. The active-site Proton donor; for dehydratase activity is the Asp-1142. Residues 1618-1908 (GIFDTIHFKD…KNSRIGRVVV (291 aa)) are enoyl reductase (ER) domain. The segment at 1934–2107 (VHTYLLGVLE…LPATTISLTV (174 aa)) is ketoreductase (KR) domain. Residues 2214–2292 (LLLPDILEMI…SLAKKIYDIR (79 aa)) form the Carrier domain. At Ser-2251 the chain carries O-(pantetheine 4'-phosphoryl)serine.

It functions in the pathway polyketide biosynthesis. Functionally, reducing polyketide synthase; part of the gene cluster B that mediates the biosynthesis of botcinic acid and its botcinin derivatives, acetate-derived polyketides that contribute to virulence when combined with the sesquiterpene botrydial. Botcinic acid and its derivatives have been shown to induce chlorosis and necrosis during host plant infection, but also have antifungal activities. Two polyketide synthases, BOA6 and BOA9, are involved in the biosynthesis of botcinins. BOA6 mediates the formation of the per-methylated tetraketide core by condensation of four units of malonyl-CoA with one unit of acetyl-CoA, which would be methylated in activated methylene groups to yield a bicyclic acid intermediate that could then either be converted to botrylactone derivatives or lose the starter acetate unit through a retro-Claisen type C-C bond cleavage to yield botcinin derivatives. The second polyketide synthase, BOA9, is probably required for the biosynthesis of the tetraketide side chain of botcinins. The methyltransferase (MT) domain within BOA6 is probably responsible for the incorporation of four methyl groups. The trans-enoyl reductase BOA5 might take over the enoyl reductase function of BOA6 that misses an ER domain. The monooxygenases BOA2, BOA3 and BOA4 might be involved in further hydroxylations at C4, C5 and C8, whereas BOA7, close to BOA9, could potentially be involved in the hydroxylation at C4 in the side chain of botcinins. The sequence is that of Reducing polyketide synthase BOA9 from Botryotinia fuckeliana (strain B05.10) (Noble rot fungus).